The following is an 852-amino-acid chain: Polyphosphate kinase (852 aa).

Disordered stretches follow at residues 1 to 36 (MATG…DRPI) and 58 to 82 (SHDP…SRRK). Residues 20–36 (VARDHPGCGPHRLDRPI) show a composition bias toward basic and acidic residues. Residues 58–67 (SHDPAPSQSV) are compositionally biased toward polar residues. Asn-131 serves as a coordination point for ATP. The segment at 251 to 303 (GDEIGPQRTPPPSDSLDNRVPSNLKRNSDTANQQPTPAENISAPEDGAEQTEP) is disordered. Residues 258-303 (RTPPPSDSLDNRVPSNLKRNSDTANQQPTPAENISAPEDGAEQTEP) form an insert region. Residues 270–289 (VPSNLKRNSDTANQQPTPAE) show a composition bias toward polar residues. Arg-524 and Arg-554 together coordinate Mg(2+). The active-site Phosphohistidine intermediate is the His-584. ATP-binding residues include Tyr-617, Arg-713, and His-741.

This sequence belongs to the polyphosphate kinase 1 (PPK1) family. Requires Mg(2+) as cofactor. Post-translationally, an intermediate of this reaction is the autophosphorylated ppk in which a phosphate is covalently linked to a histidine residue through a N-P bond.

The enzyme catalyses [phosphate](n) + ATP = [phosphate](n+1) + ADP. In terms of biological role, catalyzes the reversible transfer of the terminal phosphate of ATP to form a long-chain polyphosphate (polyP). This chain is Polyphosphate kinase, found in Rhodopirellula baltica (strain DSM 10527 / NCIMB 13988 / SH1).